The sequence spans 198 residues: Recombination protein RecR (198 aa).

The C4-type zinc-finger motif lies at 57 to 72 (CSICCNLSEHDPCPIC). A Toprim domain is found at 80–175 (NIVCVVETPQ…KVTRLGYGLP (96 aa)).

This sequence belongs to the RecR family.

Functionally, may play a role in DNA repair. It seems to be involved in an RecBC-independent recombinational process of DNA repair. It may act with RecF and RecO. This chain is Recombination protein RecR, found in Endomicrobium trichonymphae.